The sequence spans 103 residues: Small ribosomal subunit protein uS10 (103 aa).

Belongs to the universal ribosomal protein uS10 family. Part of the 30S ribosomal subunit.

Its function is as follows. Involved in the binding of tRNA to the ribosomes. This Wigglesworthia glossinidia brevipalpis protein is Small ribosomal subunit protein uS10.